The chain runs to 464 residues: Probable pectin lyase F (464 aa).

The first 20 residues, 1 to 20, serve as a signal peptide directing secretion; that stretch reads MAIIRSVIAATALLGAAVNA. A disulfide bridge links Cys-80 with Cys-103. Asn-126 carries N-linked (GlcNAc...) asparagine glycosylation. Arg-252 is an active-site residue. Cys-319 and Cys-327 are joined by a disulfide. The tract at residues 424–464 is disordered; that stretch reads EHEVSTPAVPTPTPVPSSVGSHGSTAGSSHPPAFSRTSFES. Residues 439–448 are compositionally biased toward low complexity; sequence PSSVGSHGST.

The protein belongs to the polysaccharide lyase 1 family.

The protein localises to the secreted. The enzyme catalyses Eliminative cleavage of (1-&gt;4)-alpha-D-galacturonan methyl ester to give oligosaccharides with 4-deoxy-6-O-methyl-alpha-D-galact-4-enuronosyl groups at their non-reducing ends.. Functionally, pectinolytic enzymes consist of four classes of enzymes: pectin lyase, polygalacturonase, pectin methylesterase and rhamnogalacturonase. Among pectinolytic enzymes, pectin lyase is the most important in depolymerization of pectin, since it cleaves internal glycosidic bonds of highly methylated pectins. The polypeptide is Probable pectin lyase F (pelF) (Emericella nidulans (strain FGSC A4 / ATCC 38163 / CBS 112.46 / NRRL 194 / M139) (Aspergillus nidulans)).